Here is a 476-residue protein sequence, read N- to C-terminus: Dihydrolipoyl dehydrogenase (476 aa).

FAD is bound by residues 36 to 45, Lys-54, and Ala-117; that span reads EHQERLGGVC. Cysteines 45 and 50 form a disulfide. NAD(+)-binding positions include 182 to 186, Asp-205, Val-238, and 271 to 274; these read GGGII and AIGR. The FAD site is built by Asp-314 and Ala-322. His-446 functions as the Proton acceptor in the catalytic mechanism.

The protein belongs to the class-I pyridine nucleotide-disulfide oxidoreductase family. In terms of assembly, homodimer. It depends on FAD as a cofactor.

Its subcellular location is the cytoplasm. It carries out the reaction N(6)-[(R)-dihydrolipoyl]-L-lysyl-[protein] + NAD(+) = N(6)-[(R)-lipoyl]-L-lysyl-[protein] + NADH + H(+). Lipoamide dehydrogenase is a component of the alpha-ketoacid dehydrogenase complexes. The sequence is that of Dihydrolipoyl dehydrogenase (lpdA) from Buchnera aphidicola subsp. Schizaphis graminum (strain Sg).